Here is a 73-residue protein sequence, read N- to C-terminus: UPF0235 protein LA_1736 (73 aa).

This sequence belongs to the UPF0235 family.

This Leptospira interrogans serogroup Icterohaemorrhagiae serovar Lai (strain 56601) protein is UPF0235 protein LA_1736.